Consider the following 37-residue polypeptide: Large ribosomal subunit protein bL36c (37 aa).

The protein belongs to the bacterial ribosomal protein bL36 family.

It is found in the plastid. The protein resides in the chloroplast. The chain is Large ribosomal subunit protein bL36c (rpl36) from Euglena gracilis.